Here is a 434-residue protein sequence, read N- to C-terminus: Adenylosuccinate synthetase (434 aa).

Residues 12-18 (GDEGKGK) and 40-42 (GHT) contribute to the GTP site. Aspartate 13 serves as the catalytic Proton acceptor. Residues aspartate 13 and glycine 40 each coordinate Mg(2+). Residues 13-16 (DEGK), 38-41 (NAGH), threonine 129, arginine 143, glutamine 224, threonine 239, and arginine 303 contribute to the IMP site. The active-site Proton donor is histidine 41. 299–305 (AVTGRPR) contacts substrate. Residues arginine 305, 331–333 (KLD), and 413–415 (STG) each bind GTP.

Belongs to the adenylosuccinate synthetase family. Homodimer. Mg(2+) is required as a cofactor.

The protein localises to the cytoplasm. The enzyme catalyses IMP + L-aspartate + GTP = N(6)-(1,2-dicarboxyethyl)-AMP + GDP + phosphate + 2 H(+). The protein operates within purine metabolism; AMP biosynthesis via de novo pathway; AMP from IMP: step 1/2. Its function is as follows. Plays an important role in the de novo pathway of purine nucleotide biosynthesis. Catalyzes the first committed step in the biosynthesis of AMP from IMP. This is Adenylosuccinate synthetase from Solibacter usitatus (strain Ellin6076).